We begin with the raw amino-acid sequence, 169 residues long: Glycine-rich RNA-binding protein 10 (169 aa).

The region spanning 6 to 84 (YRCFVGGLAW…RTITVNEAQS (79 aa)) is the RRM domain. Disordered stretches follow at residues 80 to 101 (NEAQ…YGGR) and 121 to 169 (GYGS…GGGW). Residues 85 to 101 (RGGGGGGGRGGGGYGGR) show a composition bias toward gly residues.

In terms of tissue distribution, expressed only in roots and stems.

Its function is as follows. Possibly has a role in RNA transcription or processing during stress. The sequence is that of Glycine-rich RNA-binding protein 10 (GRP10) from Brassica napus (Rape).